Reading from the N-terminus, the 428-residue chain is Histidine--tRNA ligase (428 aa).

The protein belongs to the class-II aminoacyl-tRNA synthetase family. Homodimer.

The protein resides in the cytoplasm. It catalyses the reaction tRNA(His) + L-histidine + ATP = L-histidyl-tRNA(His) + AMP + diphosphate + H(+). The chain is Histidine--tRNA ligase from Chromohalobacter salexigens (strain ATCC BAA-138 / DSM 3043 / CIP 106854 / NCIMB 13768 / 1H11).